We begin with the raw amino-acid sequence, 343 residues long: Ricin B-like lectin R40G2 (343 aa).

The 147-residue stretch at 194-340 (TVRVFSAAGE…CEGDNQRWKI (147 aa)) folds into the Ricin B-type lectin domain.

Its function is as follows. Lectin which binds carbohydrates in vitro. Interacts through its lectin domain with glycan structures containing specific motifs. In Oryza sativa subsp. japonica (Rice), this protein is Ricin B-like lectin R40G2.